The primary structure comprises 1233 residues: NACHT, LRR and PYD domains-containing protein 1b allele 1 (1233 aa).

Residues 1 to 22 (MEESPPKQKSNTKVAQHEGQQD) are disordered. In terms of domain architecture, NACHT spans 126-435 (QLVIIEGAAG…EFFAAISCIL (310 aa)). 132–139 (GAAGIGKS) serves as a coordination point for ATP. LRR repeat units follow at residues 627–647 (NLEGLDLSGNSLRYSVVQSLC) and 684–704 (SLTELYLQLNDLGDDGVRMLC). The interval 850–983 (FWGPIGPVAT…GYTVLKNPSF (134 aa)) is ZU5. The FIIND domain occupies 850–1133 (FWGPIGPVAT…LRPALPRIAQ (284 aa)). The interval 984-1133 (SPMGVVLRII…LRPALPRIAQ (150 aa)) is UPA. Residues 1143 to 1226 (HFMDQHREQL…HLVMDLLEKS (84 aa)) form the CARD domain.

It belongs to the NLRP family. Interacts with DPP9; leading to inhibit activation of the inflammasome. DPP9 acts via formation of a ternary complex, composed of a DPP9 homodimer, one full-length Nlrp1b protein, and one cleaved C-terminus of Nlrp1b (NACHT, LRR and PYD domains-containing protein 1b, C-terminus). Interacts with DPP8; leading to inhibit activation of the inflammasome, probably via formation of a ternary complex with DPP8. Interacts (via LRR repeats) with BCL2 and BCL2L1 (via the loop between motifs BH4 and BH3). Interacts with NOD2; this interaction may increase IL1B release. Interacts with EIF2AK2/PKR; this interaction requires EIF2AK2 activity, is accompanied by EIF2AK2 autophosphorylation and promotes inflammasome assembly in response to B.anthracis lethal toxin. Interacts with MEFV; this interaction targets Nlrp1b to degradation by autophagy, hence preventing excessive IL1B- and IL18-mediated inflammation. As to quaternary structure, interacts with the C-terminal part of Nlrp1b (NACHT, LRR and PYD domains-containing protein 1b, C-terminus) in absence of pathogens and other damage-associated signals. In terms of assembly, interacts with the N-terminal part of Nlrp1b (NACHT, LRR and PYD domains-containing protein 1b, N-terminus) in absence of pathogens and other damage-associated signals. Homomultimer; forms the Nlrp1b inflammasome polymeric complex, a filament composed of homopolymers of this form in response to pathogens and other damage-associated signals. The Nlrp1b inflammasome polymeric complex directly recruits pro-caspase-1 (proCASP1) independently of PYCARD/ASC. Interacts (via CARD domain) with CASP1 (via CARD domain); leading to CASP1 activation. Post-translationally, autocatalytically cleaved. Autocatalytic cleavage in FIIND region occurs constitutively, prior to activation signals, and is required for inflammasome activity (IL1B release), possibly by facilitating CASP1 binding. Both N- and C-terminal parts remain associated non-covalently. Ubiquitinated by UBR2, a component of the N-end rule pathway in response to pathogens and other damage-associated signals, leading to its degradation by the proteasome and subsequent release of the cleaved C-terminal part of the protein (NACHT, LRR and PYD domains-containing protein 1b, C-terminus), which polymerizes and forms the Nlrp1b inflammasome. In terms of processing, (Microbial infection) Cleavage by B.anthracis lethal toxin (LT) endopeptidase promotes ubiquitination and degradation of the N-terminal part, releasing the cleaved C-terminal part of the protein (NACHT, LRR and PYD domains-containing protein 1b, C-terminus), which polymerizes and forms the Nlrp1b inflammasome. Post-translationally, (Microbial infection) Ubiquitinated by S.flexneri IpaH7.8, leading to its degradation by the proteasome and subsequent release of the cleaved C-terminal part of the protein (NACHT, LRR and PYD domains-containing protein 1b, C-terminus), which polymerizes and forms the Nlrp1b inflammasome. In terms of tissue distribution, widely expressed, including in macrophages.

It localises to the cytoplasm. Its subcellular location is the cytosol. The protein localises to the membrane. The protein resides in the inflammasome. With respect to regulation, activated by cleavage by B.anthracis lethal toxin (LT) endopeptidase: cleavage by LT promotes ubiquitination and degradation of the N-terminal part, releasing the cleaved C-terminal part of the protein (NACHT, LRR and PYD domains-containing protein 1b, C-terminus), which polymerizes and forms the Nlrp1b inflammasome. Activated by S.flexneri IpaH7.8, an E3 ubiquitin ligase that mediates ubiquitination and degradation of the N-terminal part, releasing the cleaved C-terminal part of the protein, which polymerizes and forms the Nlrp1b inflammasome. Nlrp1b inflammasome is inhibited by DPP8 and DPP9, which sequester the C-terminal fragment of Nlrp1b (NACHT, LRR and PYD domains-containing protein 1b, C-terminus) in a ternary complex, thereby preventing Nlrp1b oligomerization and activation. Nlrp1b inflammasome is activated by Val-boroPro (Talabostat, PT-100), an inhibitor of dipeptidyl peptidases DPP8 and DPP9. Val-boroPro relieves inhibition of DPP8 and/or DPP9 by promoting disruption of the ternary complex, releasing its C-terminal part from autoinhibition. Activated by metabolic inhibitors, such as 2-deoxy-D-glucose and sodium azide, by nutrient deprivation and hypoxia, possibly due to a decrease in cytosolic ATP. Also activated by Toxoplasma gondii. Not activated by muramyl dipeptide, nor by full-length bacterial peptidoglycan. Contrary to its human ortholog, not activated by positive-strand RNA virus such as Semliki Forrest virus or long dsRNA. Functionally, acts as the sensor component of the Nlrp1b inflammasome, which mediates inflammasome activation in response to various pathogen-associated signals, leading to subsequent pyroptosis. Inflammasomes are supramolecular complexes that assemble in the cytosol in response to pathogens and other damage-associated signals and play critical roles in innate immunity and inflammation. Acts as a recognition receptor (PRR): recognizes specific pathogens and other damage-associated signals, such as B.anthracis lethal toxin (LT) or Val-boroPro inhibitor, and mediates the formation of the inflammasome polymeric complex. In response to pathogen-associated signals, the N-terminal part of Nlrp1b is degraded by the proteasome, releasing the cleaved C-terminal part of the protein (NACHT, LRR and PYD domains-containing protein 1b, C-terminus), which polymerizes to initiate the formation of the inflammasome complex: the inflammasome directly recruits pro-caspase-1 (proCASP1) independently of PYCARD/ASC and promotes caspase-1 (CASP1) activation, which subsequently cleaves and activates inflammatory cytokines IL1B and IL18 and gasdermin-D (GSDMD), leading to pyroptosis. In the absence of GSDMD expression, the Nlrp1b inflammasome is able to recruit and activate CASP8, leading to activation of gasdermin-E (GSDME). Activation of Nlrp1b inflammasome is also required for HMGB1 secretion; the active cytokines and HMGB1 stimulate inflammatory responses. Primary mediator of macrophage susceptibility to B.anthracis LT: in response to B.anthracis infection, macrophages and dendritic cells release IL1B and undergo pyroptosis. This early inflammatory response to the toxin increases resistance to infection by B.anthracis spores. In terms of biological role, constitutes the precursor of the Nlrp1b inflammasome, which mediates autoproteolytic processing within the FIIND domain to generate the N-terminal and C-terminal parts, which are associated non-covalently in absence of pathogens and other damage-associated signals. Regulatory part that prevents formation of the Nlrp1b inflammasome: in absence of pathogens and other damage-associated signals, interacts with the C-terminal part of Nlrp1b (NACHT, LRR and PYD domains-containing protein 1b, C-terminus), preventing activation of the Nlrp1b inflammasome. In response to pathogen-associated signals, this part is ubiquitinated by the N-end rule pathway and degraded by the proteasome, releasing the cleaved C-terminal part of the protein, which polymerizes and forms the Nlrp1b inflammasome. Its function is as follows. Constitutes the active part of the Nlrp1b inflammasome. In absence of pathogens and other damage-associated signals, interacts with the N-terminal part of Nlrp1b (NACHT, LRR and PYD domains-containing protein 1b, N-terminus), preventing activation of the Nlrp1b inflammasome. In response to pathogen-associated signals, the N-terminal part of Nlrp1b is degraded by the proteasome, releasing this form, which polymerizes to form the Nlrp1b inflammasome complex: the Nlrp1b inflammasome complex then directly recruits pro-caspase-1 (proCASP1) and promotes caspase-1 (CASP1) activation, leading to gasdermin-D (GSDMD) cleavage and subsequent pyroptosis. The polypeptide is NACHT, LRR and PYD domains-containing protein 1b allele 1 (Mus musculus (Mouse)).